Reading from the N-terminus, the 335-residue chain is Tetraacyldisaccharide 4'-kinase (335 aa).

Residue 58–65 participates in ATP binding; that stretch reads TVGGSGKT.

The protein belongs to the LpxK family.

It catalyses the reaction a lipid A disaccharide + ATP = a lipid IVA + ADP + H(+). It functions in the pathway glycolipid biosynthesis; lipid IV(A) biosynthesis; lipid IV(A) from (3R)-3-hydroxytetradecanoyl-[acyl-carrier-protein] and UDP-N-acetyl-alpha-D-glucosamine: step 6/6. In terms of biological role, transfers the gamma-phosphate of ATP to the 4'-position of a tetraacyldisaccharide 1-phosphate intermediate (termed DS-1-P) to form tetraacyldisaccharide 1,4'-bis-phosphate (lipid IVA). This is Tetraacyldisaccharide 4'-kinase from Shewanella sp. (strain ANA-3).